The primary structure comprises 257 residues: E3 ubiquitin-protein ligase RNF170 (257 aa).

Residues 1 to 24 (MADNQEGRPYFPLDEGSIIEGVSD) are Lumenal-facing. Residues 25–45 (QVIVVVLLSFVAVGSLLYLLL) traverse the membrane as a helical segment. Residues 46–200 (RNDEQNIHPE…GGLFWMFRIR (155 aa)) lie on the Cytoplasmic side of the membrane. The segment at 87–130 (CPVCLQQATFPVETNCGHLFCGSCIIAYWRYGSWLGAINCPICR) adopts an RING-type zinc-finger fold. The helical transmembrane segment at 201–221 (IVLCLLGALFYLVSPLDIIPE) threads the bilayer. Residue Ala-222 is a topological domain, lumenal. Residues 223–243 (VFGLLGFLDDFFVLFLLLIYI) form a helical membrane-spanning segment. At 244–257 (SIMYREVVTQRLYR) the chain is on the cytoplasmic side.

The protein localises to the endoplasmic reticulum membrane. The catalysed reaction is S-ubiquitinyl-[E2 ubiquitin-conjugating enzyme]-L-cysteine + [acceptor protein]-L-lysine = [E2 ubiquitin-conjugating enzyme]-L-cysteine + N(6)-ubiquitinyl-[acceptor protein]-L-lysine.. It participates in protein modification; protein ubiquitination. In terms of biological role, E3 ubiquitin-protein ligase that plays an essential role in stimulus-induced inositol 1,4,5-trisphosphate receptor (ITPR) ubiquitination and degradation via the endoplasmic reticulum-associated degradation (ERAD) pathway. Also involved in ITPR turnover in resting cells. The protein is E3 ubiquitin-protein ligase RNF170 (rnf170) of Xenopus tropicalis (Western clawed frog).